Consider the following 261-residue polypeptide: Uridylate kinase (261 aa).

The tract at residues 1 to 23 (MTEPDVAGAPASKPEPASTGAAS) is disordered. Residue 36–39 (KLGG) participates in ATP binding. Gly-77 contributes to the UMP binding site. ATP is bound by residues Gly-78 and Arg-82. Residues Asp-97 and 158–165 (MGLPYFST) each bind UMP. Residues Phe-191 and Asp-194 each contribute to the ATP site.

The protein belongs to the UMP kinase family. As to quaternary structure, homohexamer.

The protein resides in the cytoplasm. The catalysed reaction is UMP + ATP = UDP + ADP. Its pathway is pyrimidine metabolism; CTP biosynthesis via de novo pathway; UDP from UMP (UMPK route): step 1/1. With respect to regulation, inhibited by UTP. Its function is as follows. Catalyzes the reversible phosphorylation of UMP to UDP. The polypeptide is Uridylate kinase (Mycobacterium tuberculosis (strain ATCC 25177 / H37Ra)).